Consider the following 324-residue polypeptide: D-alanine--D-alanine ligase (324 aa).

Residues 121–321 (NQYLKAFGVR…IKDVMTDIIE (201 aa)) enclose the ATP-grasp domain. 149–204 (VEKIGLPCFIKPNLGGSSFGVTKVKTREQIQPAIAKAFSEAEEVMIEAFMGGTELT) lines the ATP pocket. Mg(2+)-binding residues include D275, E288, and N290.

This sequence belongs to the D-alanine--D-alanine ligase family. The cofactor is Mg(2+). Requires Mn(2+) as cofactor.

Its subcellular location is the cytoplasm. It carries out the reaction 2 D-alanine + ATP = D-alanyl-D-alanine + ADP + phosphate + H(+). The protein operates within cell wall biogenesis; peptidoglycan biosynthesis. Cell wall formation. This is D-alanine--D-alanine ligase from Bacteroides fragilis (strain ATCC 25285 / DSM 2151 / CCUG 4856 / JCM 11019 / LMG 10263 / NCTC 9343 / Onslow / VPI 2553 / EN-2).